A 241-amino-acid polypeptide reads, in one-letter code: PRA1 family protein H (241 aa).

Transmembrane regions (helical) follow at residues 142-162 (LFIV…VGLL), 189-205 (LSIG…LTFL), and 209-228 (MALF…HAGF).

It belongs to the PRA1 family.

It localises to the endoplasmic reticulum membrane. Its function is as follows. May be involved in both secretory and endocytic intracellular trafficking in the endosomal/prevacuolar compartments. The chain is PRA1 family protein H (PRA1H) from Arabidopsis thaliana (Mouse-ear cress).